We begin with the raw amino-acid sequence, 198 residues long: Probable GTP-binding protein EngB (198 aa).

In terms of domain architecture, EngB-type G spans 22–195; it reads HRNEVAFVGR…IDKLFLEFAT (174 aa). Residues 30–37, 57–61, 75–78, 142–145, and 174–176 contribute to the GTP site; these read GRSNVGKS, GKTRL, DLPG, TKSD, and YSS. 2 residues coordinate Mg(2+): Ser-37 and Thr-59.

This sequence belongs to the TRAFAC class TrmE-Era-EngA-EngB-Septin-like GTPase superfamily. EngB GTPase family. The cofactor is Mg(2+).

In terms of biological role, necessary for normal cell division and for the maintenance of normal septation. The chain is Probable GTP-binding protein EngB from Clostridium botulinum (strain Eklund 17B / Type B).